A 429-amino-acid chain; its full sequence is Adenylosuccinate synthetase (429 aa).

GTP-binding positions include 12-18 (GDEGKGK) and 40-42 (GHT). Asp13 serves as the catalytic Proton acceptor. 2 residues coordinate Mg(2+): Asp13 and Gly40. IMP contacts are provided by residues 13 to 16 (DEGK), 38 to 41 (NAGH), Thr128, Arg142, Gln223, Thr238, and Arg302. His41 acts as the Proton donor in catalysis. 298–304 (TVTKRPR) provides a ligand contact to substrate. GTP is bound by residues Arg304, 330 to 332 (CLD), and 412 to 414 (SVG).

It belongs to the adenylosuccinate synthetase family. In terms of assembly, homodimer. Mg(2+) serves as cofactor.

The protein resides in the cytoplasm. It catalyses the reaction IMP + L-aspartate + GTP = N(6)-(1,2-dicarboxyethyl)-AMP + GDP + phosphate + 2 H(+). It functions in the pathway purine metabolism; AMP biosynthesis via de novo pathway; AMP from IMP: step 1/2. Its function is as follows. Plays an important role in the de novo pathway of purine nucleotide biosynthesis. Catalyzes the first committed step in the biosynthesis of AMP from IMP. This chain is Adenylosuccinate synthetase, found in Lactiplantibacillus plantarum (strain ATCC BAA-793 / NCIMB 8826 / WCFS1) (Lactobacillus plantarum).